The following is a 451-amino-acid chain: Acetylornithine aminotransferase, mitochondrial (451 aa).

Residue K302 is modified to N6-(pyridoxal phosphate)lysine.

Belongs to the class-III pyridoxal-phosphate-dependent aminotransferase family. Pyridoxal 5'-phosphate is required as a cofactor. In terms of tissue distribution, found at highest levels in nodules, confined to the infected cells.

The protein resides in the mitochondrion. The catalysed reaction is N(2)-acetyl-L-ornithine + 2-oxoglutarate = N-acetyl-L-glutamate 5-semialdehyde + L-glutamate. It functions in the pathway amino-acid biosynthesis; L-arginine biosynthesis; N(2)-acetyl-L-ornithine from L-glutamate: step 4/4. Involved in the biosynthesis of citrulline. This Alnus glutinosa (European alder) protein is Acetylornithine aminotransferase, mitochondrial (AG118).